Here is a 424-residue protein sequence, read N- to C-terminus: Histidine--tRNA ligase (424 aa).

The protein belongs to the class-II aminoacyl-tRNA synthetase family. In terms of assembly, homodimer.

It localises to the cytoplasm. It catalyses the reaction tRNA(His) + L-histidine + ATP = L-histidyl-tRNA(His) + AMP + diphosphate + H(+). The chain is Histidine--tRNA ligase from Shewanella halifaxensis (strain HAW-EB4).